Reading from the N-terminus, the 222-residue chain is Putative N-acetylmannosamine-6-phosphate 2-epimerase (222 aa).

It belongs to the NanE family.

The catalysed reaction is an N-acyl-D-glucosamine 6-phosphate = an N-acyl-D-mannosamine 6-phosphate. It functions in the pathway amino-sugar metabolism; N-acetylneuraminate degradation; D-fructose 6-phosphate from N-acetylneuraminate: step 3/5. Converts N-acetylmannosamine-6-phosphate (ManNAc-6-P) to N-acetylglucosamine-6-phosphate (GlcNAc-6-P). This Staphylococcus aureus (strain bovine RF122 / ET3-1) protein is Putative N-acetylmannosamine-6-phosphate 2-epimerase.